The following is a 201-amino-acid chain: Anthranilate synthase component 2 (201 aa).

The Glutamine amidotransferase type-1 domain occupies 2-201; that stretch reads KVLILDNYDS…KCLLRNFINS (200 aa). 59–61 serves as a coordination point for L-glutamine; sequence GPG. Cys-89 functions as the Nucleophile; for GATase activity in the catalytic mechanism. L-glutamine-binding positions include Gln-93 and 139–140; that span reads SL. Residues His-182 and Glu-184 each act as for GATase activity in the active site.

Heterotetramer consisting of two non-identical subunits: a beta subunit (TrpG) and a large alpha subunit (TrpE).

It catalyses the reaction chorismate + L-glutamine = anthranilate + pyruvate + L-glutamate + H(+). It functions in the pathway amino-acid biosynthesis; L-tryptophan biosynthesis; L-tryptophan from chorismate: step 1/5. Part of a heterotetrameric complex that catalyzes the two-step biosynthesis of anthranilate, an intermediate in the biosynthesis of L-tryptophan. In the first step, the glutamine-binding beta subunit (TrpG) of anthranilate synthase (AS) provides the glutamine amidotransferase activity which generates ammonia as a substrate that, along with chorismate, is used in the second step, catalyzed by the large alpha subunit of AS (TrpE) to produce anthranilate. In the absence of TrpG, TrpE can synthesize anthranilate directly from chorismate and high concentrations of ammonia. This Leptospira biflexa protein is Anthranilate synthase component 2 (trpG).